Reading from the N-terminus, the 525-residue chain is 2-isopropylmalate synthase (525 aa).

Positions V5–Y267 constitute a Pyruvate carboxyltransferase domain. The Mn(2+) site is built by D14, H202, H204, and N238. Residues R392–V525 are regulatory domain.

It belongs to the alpha-IPM synthase/homocitrate synthase family. LeuA type 1 subfamily. Homodimer. The cofactor is Mn(2+).

The protein localises to the cytoplasm. The catalysed reaction is 3-methyl-2-oxobutanoate + acetyl-CoA + H2O = (2S)-2-isopropylmalate + CoA + H(+). Its pathway is amino-acid biosynthesis; L-leucine biosynthesis; L-leucine from 3-methyl-2-oxobutanoate: step 1/4. Its function is as follows. Catalyzes the condensation of the acetyl group of acetyl-CoA with 3-methyl-2-oxobutanoate (2-ketoisovalerate) to form 3-carboxy-3-hydroxy-4-methylpentanoate (2-isopropylmalate). The protein is 2-isopropylmalate synthase of Sodalis glossinidius (strain morsitans).